We begin with the raw amino-acid sequence, 685 residues long: DNA ligase (685 aa).

Residues 47–51 (DSEYD), 96–97 (SL), and Glu-125 each bind NAD(+). Lys-127 serves as the catalytic N6-AMP-lysine intermediate. Residues Arg-148, Glu-185, Lys-304, and Lys-328 each coordinate NAD(+). Positions 422, 425, 440, and 446 each coordinate Zn(2+). Positions 605–685 (AEAQPLKGQT…ELLALLAANA (81 aa)) constitute a BRCT domain.

This sequence belongs to the NAD-dependent DNA ligase family. LigA subfamily. Requires Mg(2+) as cofactor. Mn(2+) serves as cofactor.

It catalyses the reaction NAD(+) + (deoxyribonucleotide)n-3'-hydroxyl + 5'-phospho-(deoxyribonucleotide)m = (deoxyribonucleotide)n+m + AMP + beta-nicotinamide D-nucleotide.. DNA ligase that catalyzes the formation of phosphodiester linkages between 5'-phosphoryl and 3'-hydroxyl groups in double-stranded DNA using NAD as a coenzyme and as the energy source for the reaction. It is essential for DNA replication and repair of damaged DNA. The chain is DNA ligase from Shewanella baltica (strain OS223).